Reading from the N-terminus, the 532-residue chain is Putative cysteine desulfurase PbSufS (532 aa).

The first 18 residues, 1 to 18 (MNNESICILLLLFVKITS), serve as a signal peptide directing secretion. Position 286 is an N6-(pyridoxal phosphate)lysine (Lys286). The Cysteine persulfide intermediate role is filled by Cys480.

Belongs to the class-V pyridoxal-phosphate-dependent aminotransferase family. Csd subfamily. Monomer. Interacts with SufE; interaction enhances cysteine desulfurase activity of SufS. It depends on pyridoxal 5'-phosphate as a cofactor.

Its subcellular location is the plastid. It is found in the apicoplast. The catalysed reaction is (sulfur carrier)-H + L-cysteine = (sulfur carrier)-SH + L-alanine. It functions in the pathway cofactor biosynthesis; iron-sulfur cluster biosynthesis. Functionally, catalyzes sulfur activation and mobilization in sulfur mobilization (SUF) pathway for iron-sulfur (Fe-S) cluster biogenesis. Active when in complex with a partner protein SufE. Required for apicoplast maintenance. Plays a role in the development of sporozoites in oocysts in mosquitoes. This Plasmodium berghei (strain Anka) protein is Putative cysteine desulfurase PbSufS.